Reading from the N-terminus, the 345-residue chain is Phosphoribosylformylglycinamidine cyclo-ligase (345 aa).

The protein belongs to the AIR synthase family.

It localises to the cytoplasm. It catalyses the reaction 2-formamido-N(1)-(5-O-phospho-beta-D-ribosyl)acetamidine + ATP = 5-amino-1-(5-phospho-beta-D-ribosyl)imidazole + ADP + phosphate + H(+). The protein operates within purine metabolism; IMP biosynthesis via de novo pathway; 5-amino-1-(5-phospho-D-ribosyl)imidazole from N(2)-formyl-N(1)-(5-phospho-D-ribosyl)glycinamide: step 2/2. This Shewanella baltica (strain OS185) protein is Phosphoribosylformylglycinamidine cyclo-ligase.